The sequence spans 136 residues: ATP synthase epsilon chain (136 aa).

The tract at residues 112-136 (GNSADKLKAKESLNKARARSQAVGE) is disordered. Residues 116–125 (DKLKAKESLN) show a composition bias toward basic and acidic residues.

It belongs to the ATPase epsilon chain family. As to quaternary structure, F-type ATPases have 2 components, CF(1) - the catalytic core - and CF(0) - the membrane proton channel. CF(1) has five subunits: alpha(3), beta(3), gamma(1), delta(1), epsilon(1). CF(0) has three main subunits: a, b and c.

It is found in the cellular thylakoid membrane. Its function is as follows. Produces ATP from ADP in the presence of a proton gradient across the membrane. The chain is ATP synthase epsilon chain from Prochlorococcus marinus (strain SARG / CCMP1375 / SS120).